Here is a 330-residue protein sequence, read N- to C-terminus: Membrane progestin receptor gamma (330 aa).

The Cytoplasmic segment spans residues 1 to 51; it reads MLSLKLPRLFRIDQVPQVFHEQGILFGYRHPQSSATACILSLFQMTNETLN. The chain crosses the membrane as a helical span at residues 52-72; that stretch reads IWTHLLPFWFFVWRFMTALYV. The Extracellular segment spans residues 73 to 81; the sequence is TDIQNDSYS. A helical transmembrane segment spans residues 82–101; that stretch reads WPMLVYMCTSCVYPLASSCA. Topologically, residues 102–113 are cytoplasmic; it reads HTFSSMSKNARH. The chain crosses the membrane as a helical span at residues 114-134; it reads ICYFLDYGAVNLFSLGSAIAY. Residues 135 to 141 are Extracellular-facing; sequence SAYTFPD. A helical membrane pass occupies residues 142–162; it reads ALVCSTFHECYVALAVLNTIL. Residues 163-186 are Cytoplasmic-facing; sequence STGLSCYSRFLELQKPRLCKLLRV. The helical transmembrane segment at 187–207 threads the bilayer; it reads LAFAYPYTWDSLPIFYRLFLF. The Extracellular segment spans residues 208-253; it reads PGESSRNEAMLYHQKHMGMTLLASFFYSAHLPERLAPGRFDYIGHS. The chain crosses the membrane as a helical span at residues 254 to 274; that stretch reads HQLFHVCVILATHLQMEAILL. The Cytoplasmic portion of the chain corresponds to 275 to 294; it reads DKTLRREWLLATSRPFSFPQ. Residues 295–315 form a helical membrane-spanning segment; the sequence is IAAAMLLCIIFSLSNIIYFSA. Residues 316-330 are Extracellular-facing; the sequence is ALYRIPEPELHEKET.

This sequence belongs to the ADIPOR family.

It is found in the cell membrane. Plasma membrane progesterone (P4) receptor coupled to G proteins. Seems to act through a G(i) mediated pathway. May be involved in oocyte maturation. The sequence is that of Membrane progestin receptor gamma from Mus musculus (Mouse).